A 149-amino-acid chain; its full sequence is Ribonuclease H (149 aa).

The region spanning 4 to 145 (QRGVVEAFTD…ADALANQGID (142 aa)) is the RNase H type-1 domain. Positions 13, 51, 73, and 137 each coordinate Mg(2+).

The protein belongs to the RNase H family. In terms of assembly, monomer. Mg(2+) is required as a cofactor.

It localises to the cytoplasm. The catalysed reaction is Endonucleolytic cleavage to 5'-phosphomonoester.. In terms of biological role, endonuclease that specifically degrades the RNA of RNA-DNA hybrids. The chain is Ribonuclease H from Halorhodospira halophila (strain DSM 244 / SL1) (Ectothiorhodospira halophila (strain DSM 244 / SL1)).